Consider the following 456-residue polypeptide: UDP-N-acetylmuramate--L-alanine ligase (456 aa).

Residue Gly112 to Thr118 coordinates ATP.

The protein belongs to the MurCDEF family.

Its subcellular location is the cytoplasm. The enzyme catalyses UDP-N-acetyl-alpha-D-muramate + L-alanine + ATP = UDP-N-acetyl-alpha-D-muramoyl-L-alanine + ADP + phosphate + H(+). It participates in cell wall biogenesis; peptidoglycan biosynthesis. In terms of biological role, cell wall formation. The polypeptide is UDP-N-acetylmuramate--L-alanine ligase (Trichlorobacter lovleyi (strain ATCC BAA-1151 / DSM 17278 / SZ) (Geobacter lovleyi)).